Consider the following 164-residue polypeptide: ATP synthase subunit b (164 aa).

Residues 8-28 (FGIIFWQTITLLFVLFILGKF) traverse the membrane as a helical segment.

Belongs to the ATPase B chain family. In terms of assembly, F-type ATPases have 2 components, F(1) - the catalytic core - and F(0) - the membrane proton channel. F(1) has five subunits: alpha(3), beta(3), gamma(1), delta(1), epsilon(1). F(0) has three main subunits: a(1), b(2) and c(10-14). The alpha and beta chains form an alternating ring which encloses part of the gamma chain. F(1) is attached to F(0) by a central stalk formed by the gamma and epsilon chains, while a peripheral stalk is formed by the delta and b chains.

It localises to the cell membrane. Its function is as follows. F(1)F(0) ATP synthase produces ATP from ADP in the presence of a proton or sodium gradient. F-type ATPases consist of two structural domains, F(1) containing the extramembraneous catalytic core and F(0) containing the membrane proton channel, linked together by a central stalk and a peripheral stalk. During catalysis, ATP synthesis in the catalytic domain of F(1) is coupled via a rotary mechanism of the central stalk subunits to proton translocation. In terms of biological role, component of the F(0) channel, it forms part of the peripheral stalk, linking F(1) to F(0). In Amoebophilus asiaticus (strain 5a2), this protein is ATP synthase subunit b.